The sequence spans 350 residues: S-adenosylmethionine:tRNA ribosyltransferase-isomerase (350 aa).

This sequence belongs to the QueA family. Monomer.

Its subcellular location is the cytoplasm. The catalysed reaction is 7-aminomethyl-7-carbaguanosine(34) in tRNA + S-adenosyl-L-methionine = epoxyqueuosine(34) in tRNA + adenine + L-methionine + 2 H(+). It participates in tRNA modification; tRNA-queuosine biosynthesis. Transfers and isomerizes the ribose moiety from AdoMet to the 7-aminomethyl group of 7-deazaguanine (preQ1-tRNA) to give epoxyqueuosine (oQ-tRNA). This is S-adenosylmethionine:tRNA ribosyltransferase-isomerase from Aliivibrio salmonicida (strain LFI1238) (Vibrio salmonicida (strain LFI1238)).